Consider the following 225-residue polypeptide: Non-structural protein V (225 aa).

Residues 65 to 72 (PVKPRRKK) form a nuclear localization signal region. The segment covering 145-157 (SNEPVSSAGSAQD) has biased composition (polar residues). The tract at residues 145–173 (SNEPVSSAGSAQDPNFKRGGANRERARGN) is disordered. The Zn(2+) site is built by His-174, Cys-193, Cys-197, Cys-209, Cys-211, Cys-214, Cys-218, and Cys-221.

This sequence belongs to the paramyxoviruses V protein family. As to quaternary structure, interacts with host IFIH1/MDA5 and DHX58/LGP2. Forms with host DDB1, CUL4A, STAT1 and STAT2 the HPIV2 virus V-dependent complex (VDC); this complex targets host STAT2 to proteasomal degradation.

It is found in the host nucleus. Functionally, plays an essential role in the inhibition of host immune response. Prevents the establishment of cellular antiviral state by blocking interferon-alpha/beta (IFN-alpha/beta) production and signaling pathway. Interacts with host IFIH1/MDA5 and DHX58/LGP2 to inhibit the transduction pathway involved in the activation of IFN-beta promoter, thus protecting the virus against cell antiviral state. Efficiently blocks type I IFN signaling following infection by targeting host STAT2 for proteasomal degradation. Also plays a role in viral growth by promoting host RhoA-induced F-actin formation. The sequence is that of Non-structural protein V (P/V) from Homo sapiens (Human).